A 319-amino-acid polypeptide reads, in one-letter code: Probable arabinan endo-1,5-alpha-L-arabinosidase C (319 aa).

The N-terminal stretch at 1-16 is a signal peptide; it reads MFVYTLIFLFLAAANA. Asp31 (proton acceptor) is an active-site residue. N-linked (GlcNAc...) asparagine glycosylation occurs at Asn190. Glu198 functions as the Proton donor in the catalytic mechanism. Residue Asn222 is glycosylated (N-linked (GlcNAc...) asparagine).

The protein belongs to the glycosyl hydrolase 43 family.

Its subcellular location is the secreted. The enzyme catalyses Endohydrolysis of (1-&gt;5)-alpha-arabinofuranosidic linkages in (1-&gt;5)-arabinans.. It participates in glycan metabolism; L-arabinan degradation. Functionally, endo-1,5-alpha-L-arabinanase involved in degradation of pectin. Its preferred substrate is linear 1,5-alpha-L-arabinan. This is Probable arabinan endo-1,5-alpha-L-arabinosidase C (abnC) from Aspergillus clavatus (strain ATCC 1007 / CBS 513.65 / DSM 816 / NCTC 3887 / NRRL 1 / QM 1276 / 107).